The following is a 456-amino-acid chain: MKIEEVKSTTKTQRIASHSHVKGLGLDESGLAKQAASGLVGQENAREACGVIVELIKSKKMAGRAVLLAGPPGTGKTALALAIAQELGSKVPFCPMVGSEVYSTEIKKTEVLMENFRRAIGLRIKETKEVYEGEVTELTPCETENPMGGYGKTISHVIIGLKTAKGTKQLKLDPSIFESLQKERVEAGDVIYIEANSGAVKRQGRCDTYATEFDLEAEEYVPLPKGDVHKKKEIIQDVTLHDLDVANARPQGGQDILSMMGQLMKPKKTEITDKLRGEINKVVNKYIDQGIAELVPGVLFVDEVHMLDIECFTYLHRALESSIAPIVIFASNRGNCVIRGTEDITSPHGIPLDLLDRVMIIRTMLYTPQEMKQIIKIRAQTEGINISEEALNHLGEIGTKTTLRYSVQLLTPANLLAKINGKDSIEKEHVEEISELFYDAKSSAKILADQQDKYMK.

A Glycyl lysine isopeptide (Lys-Gly) (interchain with G-Cter in SUMO2) cross-link involves residue K2. 70–77 provides a ligand contact to ATP; it reads GPPGTGKT. Residue K225 forms a Glycyl lysine isopeptide (Lys-Gly) (interchain with G-Cter in SUMO1); alternate linkage. A Glycyl lysine isopeptide (Lys-Gly) (interchain with G-Cter in SUMO2); alternate cross-link involves residue K225. K445 participates in a covalent cross-link: Glycyl lysine isopeptide (Lys-Gly) (interchain with G-Cter in SUMO2). K453 is modified (N6-acetyllysine).

This sequence belongs to the RuvB family. As to quaternary structure, forms homohexameric rings. Can form a dodecamer with RUVBL2 made of two stacked hexameric rings; however, even though RUVBL1 and RUVBL2 are present in equimolar ratio, the oligomeric status of each hexamer is not known. Oligomerization may regulate binding to nucleic acids and conversely, binding to nucleic acids may affect the dodecameric assembly. Interaction of the complex with DHX34 results in conformational changes of the N-terminus of the RUVBL2 subunits, resulting in loss of nucleotide binding ability and ATP hydrolysis of the complex. Interacts with the transcriptional activation domain of MYC. Component of the RNA polymerase II holoenzyme complex. May also act to bridge the LEF1/TCF1-CTNNB1 complex and TBP. Component of the NuA4 histone acetyltransferase complex which contains the catalytic subunit KAT5/TIP60 and the subunits EP400, TRRAP/PAF400, BRD8/SMAP, EPC1, DMAP1/DNMAP1, RUVBL1/TIP49, RUVBL2, ING3, actin, ACTL6A/BAF53A, MORF4L1/MRG15, MORF4L2/MRGX, MRGBP, YEATS4/GAS41, VPS72/YL1 and MEAF6. The NuA4 complex interacts with MYC and the adenovirus E1A protein. RUVBL1 interacts with EP400. Component of a NuA4-related complex which contains EP400, TRRAP/PAF400, SRCAP, BRD8/SMAP, EPC1, DMAP1/DNMAP1, RUVBL1/TIP49, RUVBL2, actin, ACTL6A/BAF53A, VPS72 and YEATS4/GAS41. Component of the BAF53 complex, at least composed of ACTL6A/BAF53A, RUVBL1/TIP49, SMARCA2/BRM, and TRRAP/PAF400. Component of some MLL1/MLL complex, at least composed of the core components KMT2A/MLL1, ASH2L, HCFC1/HCF1, WDR5 and RBBP5, as well as the facultative components BACC1, CHD8, E2F6, HSP70, INO80C, KANSL1, LAS1L, MAX, MCRS1, MGA, MYST1/MOF, PELP1, PHF20, PRP31, RING2, RUVB1/TIP49A, RUVB2/TIP49B, SENP3, TAF1, TAF4, TAF6, TAF7, TAF9 and TEX10. Associates with alpha and gamma tubulins, particularly during metaphase and early anaphase. Interacts with NPAT. Component of the chromatin-remodeling INO80 complex; specifically part of a complex module associated with the helicase ATP-binding and the helicase C-terminal domain of INO80. Interacts with IGHMBP2. Interacts with OFD1. Interacts with HINT1. Component of a complex with USP49 and PSMC5. Component of a SWR1-like complex. Component of the R2TP complex composed at least of RUVBL1, RUVBL2, RPAP3 and PIHD1. Component of the PAQosome complex which is responsible for the biogenesis of several protein complexes and which consists of R2TP complex members RUVBL1, RUVBL2, RPAP3 and PIH1D1, URI complex members PFDN2, PFDN6, PDRG1, UXT and URI1 as well as ASDURF, POLR2E and DNAAF10/WDR92. Interacts with PIH1D1. Interacts with ITFG1. Interacts with WAC; WAC positively regulates MTOR activity by promoting the assembly of the TTT complex composed of TELO2, TTI1 and TTI2 and the RUVBL complex composed of RUVBL1 and RUVBL2 into the TTT-RUVBL complex which leads to the dimerization of the mTORC1 complex and its subsequent activation. The RUVBL1/RUVBL2 complex interacts with ZNHIT1 (via HIT-type zinc finger), ZNHIT3 (via HIT-type zinc finger), ZNHIT6 (via HIT-type zinc finger) and DDX59/ZNHIT5 (via HIT-type zinc finger) in the presence of ADP. Interacts with NOPCHAP1; the interaction is direct and disrupted upon ATP binding. Interacts with SMG1. Interacts with NOP2, NOP56 and NUFIP1. In terms of assembly, (Microbial infection) Interacts with Mumps L polymerase; this interaction regulates the viral transcription. In terms of tissue distribution, ubiquitously expressed with high expression in heart, skeletal muscle and testis.

The protein localises to the nucleus matrix. The protein resides in the nucleus. It localises to the nucleoplasm. Its subcellular location is the cytoplasm. It is found in the membrane. The protein localises to the cytoskeleton. The protein resides in the microtubule organizing center. It localises to the centrosome. Its subcellular location is the dynein axonemal particle. The catalysed reaction is ATP + H2O = ADP + phosphate + H(+). In terms of biological role, possesses single-stranded DNA-stimulated ATPase and ATP-dependent DNA helicase (3' to 5') activity; hexamerization is thought to be critical for ATP hydrolysis and adjacent subunits in the ring-like structure contribute to the ATPase activity. Component of the NuA4 histone acetyltransferase complex which is involved in transcriptional activation of select genes principally by acetylation of nucleosomal histones H4 and H2A. This modification may both alter nucleosome-DNA interactions and promote interaction of the modified histones with other proteins which positively regulate transcription. This complex may be required for the activation of transcriptional programs associated with oncogene and proto-oncogene mediated growth induction, tumor suppressor mediated growth arrest and replicative senescence, apoptosis, and DNA repair. The NuA4 complex ATPase and helicase activities seem to be, at least in part, contributed by the association of RUVBL1 and RUVBL2 with EP400. NuA4 may also play a direct role in DNA repair when recruited to sites of DNA damage. Component of a SWR1-like complex that specifically mediates the removal of histone H2A.Z/H2AZ1 from the nucleosome. Proposed core component of the chromatin remodeling INO80 complex which exhibits DNA- and nucleosome-activated ATPase activity and catalyzes ATP-dependent nucleosome sliding. Plays an essential role in oncogenic transformation by MYC and also modulates transcriptional activation by the LEF1/TCF1-CTNNB1 complex. Essential for cell proliferation. May be able to bind plasminogen at cell surface and enhance plasminogen activation. This chain is RuvB-like 1, found in Homo sapiens (Human).